The following is a 429-amino-acid chain: Isocitrate dehydrogenase [NADP] (429 aa).

NADP(+) is bound at residue Thr-108. D-threo-isocitrate contacts are provided by Ser-117, Asn-119, Arg-123, Arg-133, and Arg-156. A Mg(2+)-binding site is contributed by Asp-308. Residues 340–346, Asn-353, Tyr-393, and Arg-397 contribute to the NADP(+) site; that span reads HGSAPKY.

This sequence belongs to the isocitrate and isopropylmalate dehydrogenases family. As to quaternary structure, homodimer. Mg(2+) serves as cofactor. Requires Mn(2+) as cofactor.

It carries out the reaction D-threo-isocitrate + NADP(+) = 2-oxoglutarate + CO2 + NADPH. Functionally, catalyzes the oxidative decarboxylation of isocitrate to 2-oxoglutarate and carbon dioxide with the concomitant reduction of NADP(+). The sequence is that of Isocitrate dehydrogenase [NADP] (icd) from Caldococcus noboribetus.